A 304-amino-acid chain; its full sequence is N-acetyl-D-glucosamine kinase (304 aa).

ATP contacts are provided by residues 4 to 11 (GFDMGGTK) and 133 to 140 (GVGGGLIV). Zn(2+) contacts are provided by H157, C177, C179, and C184.

It belongs to the ROK (NagC/XylR) family. NagK subfamily.

The catalysed reaction is N-acetyl-D-glucosamine + ATP = N-acetyl-D-glucosamine 6-phosphate + ADP + H(+). Its pathway is cell wall biogenesis; peptidoglycan recycling. Catalyzes the phosphorylation of N-acetyl-D-glucosamine (GlcNAc) derived from cell-wall degradation, yielding GlcNAc-6-P. The protein is N-acetyl-D-glucosamine kinase of Yersinia pseudotuberculosis serotype IB (strain PB1/+).